Consider the following 78-residue polypeptide: Large ribosomal subunit protein bL28 (78 aa).

The protein belongs to the bacterial ribosomal protein bL28 family.

This Synechococcus sp. (strain JA-2-3B'a(2-13)) (Cyanobacteria bacterium Yellowstone B-Prime) protein is Large ribosomal subunit protein bL28.